A 226-amino-acid polypeptide reads, in one-letter code: Glutathione S-transferase kappa 1 (226 aa).

Residues 15–17 (SPY), Asn-53, and 199–200 (SD) each bind glutathione.

It belongs to the GST superfamily. Kappa family.

It carries out the reaction RX + glutathione = an S-substituted glutathione + a halide anion + H(+). In Caenorhabditis elegans, this protein is Glutathione S-transferase kappa 1 (gstk-1).